The chain runs to 552 residues: MAGUK p55 subfamily member 2 (552 aa).

L27 domains lie at 8 to 59 and 60 to 118; these read SESA…EETK and LEAV…YETP. S42 is subject to Phosphoserine. Position 117 is a phosphothreonine (T117). Position 121 is a phosphoserine (S121). Residues 140–219 enclose the PDZ domain; it reads MVGIRKTAGE…SVILKILPSY (80 aa). Positions 225-293 constitute an SH3 domain; it reads PRQVFVKCHF…PSQLLEEKRK (69 aa). A Guanylate kinase-like domain is found at 350 to 537; it reads RKTLVLIGAQ…TFRELQTAME (188 aa).

The protein belongs to the MAGUK family. In terms of assembly, can homomultimerise. Interacts with CACNG2. Interacts (via the SH3-Guanylate kinase-like sub-module) with DLG4/PSD95 and DLGAP1/GKAP. Interacts (via the PDZ domain) with CADM1 (via C-terminus). Interacts with KCNN2/SK2 (via N-terminal domain). Interacts with SRC. Phosphorylated by SRC. As to expression, expressed in hippocampal neurons.

The protein resides in the cell projection. The protein localises to the dendrite. It is found in the postsynaptic density. It localises to the cytoplasm. Its subcellular location is the cytoskeleton. The protein resides in the membrane. Functionally, postsynaptic MAGUK scaffold protein that links CADM1 cell adhesion molecules to core components of the postsynaptic density. In CA1 pyramidal neurons, required for synaptic KCNN2-containing channel function and long-term potentiation expression. Seems to negatively regulate SRC function in epithelial cells. This Rattus norvegicus (Rat) protein is MAGUK p55 subfamily member 2.